Consider the following 331-residue polypeptide: Pantothenate kinase (331 aa).

109 to 116 (GSVAVGKS) contributes to the ATP binding site.

The protein belongs to the prokaryotic pantothenate kinase family.

It is found in the cytoplasm. The enzyme catalyses (R)-pantothenate + ATP = (R)-4'-phosphopantothenate + ADP + H(+). Its pathway is cofactor biosynthesis; coenzyme A biosynthesis; CoA from (R)-pantothenate: step 1/5. This Sinorhizobium medicae (strain WSM419) (Ensifer medicae) protein is Pantothenate kinase.